We begin with the raw amino-acid sequence, 168 residues long: uncharacterized protein (168 aa).

The disordered stretch occupies residues 18 to 73 (RTTVKTKSHNPKTLYPNNKPRWESKLHAGPKGFQSSRTSEKPGRPDPDPEDDPPIP). Residues 55–64 (TSEKPGRPDP) are compositionally biased toward basic and acidic residues. The next 2 membrane-spanning stretches (helical) occupy residues 84 to 104 (IVVSVGTPLGLGVAILKVLEV) and 113 to 133 (VPLWVPYLTTLVTFGSSALGI).

The protein resides in the membrane. This is an uncharacterized protein from Arabidopsis thaliana (Mouse-ear cress).